The following is a 686-amino-acid chain: CAI-1 autoinducer sensor kinase/phosphatase CqsS (686 aa).

6 consecutive transmembrane segments (helical) span residues 21–41, 47–64, 77–97, 100–120, 124–144, and 152–172; these read LVGW…EYWF, NLGL…LVFR, GYFL…MMLM, WSTI…LLVH, VMAL…YGLT, and IEWQ…LCFF. The 226-residue stretch at 191 to 416 folds into the Histidine kinase domain; it reads GIAHEMRNPL…EFVLSFPRYD (226 aa). Residue His-194 is modified to Phosphohistidine; by autocatalysis. Residues 569–686 enclose the Response regulatory domain; that stretch reads RILVVDDNQS…VLLNKVAAWV (118 aa). At Asp-618 the chain carries 4-aspartylphosphate.

The protein resides in the cell membrane. The enzyme catalyses ATP + protein L-histidine = ADP + protein N-phospho-L-histidine.. Its function is as follows. Senses the quorum-sensing autoinducer CAI-1 ((S)-3-hydroxytridecan-4-one) which probably functions as an intragenus signal. The sensory signal is then relayed to LuxU and LuxO. The chain is CAI-1 autoinducer sensor kinase/phosphatase CqsS (cqsS) from Vibrio cholerae serotype O1 (strain ATCC 39315 / El Tor Inaba N16961).